We begin with the raw amino-acid sequence, 230 residues long: Type II restriction enzyme Eco47I (230 aa).

The catalysed reaction is Endonucleolytic cleavage of DNA to give specific double-stranded fragments with terminal 5'-phosphates.. Functionally, a P subtype restriction enzyme that recognizes the double-stranded sequence 5'-GGWCC-3' and cleaves after G-1. This is Type II restriction enzyme Eco47I from Escherichia coli.